We begin with the raw amino-acid sequence, 721 residues long: Protein mu-NS (721 aa).

The tract at residues 1–13 is interaction with sigma-NS; the sequence is MASFKGFSANTVP. The interval 1-38 is RNA-binding; sequence MASFKGFSANTVPVSKTRKDTSSLTATPGLRAPSMSSP. The tract at residues 14–40 is interaction with mu-2; sequence VSKTRKDTSSLTATPGLRAPSMSSPVD. Residues 17–37 are disordered; the sequence is TRKDTSSLTATPGLRAPSMSS. The interval 471 to 721 is involved in the formation of factory-like inclusions; the sequence is QSDTVDGIKL…IDFSVPADEL (251 aa). 2 coiled-coil regions span residues 523–556 and 632–686; these read LLSQLRELSSEVTRLQMDLSRTQAINTRLEADVK and KQAH…NQRQ.

It belongs to the orthoreovirus mu-NS protein family. Interacts with mu-2. Interacts with sigma-NS; in viral factories. Interacts with the inner capsid proteins lambda-1 and sigma-2, and outer capsid protein lambda-2; in viral factories. In terms of processing, the N-terminus is blocked.

The protein localises to the host cytoplasm. Non-structural protein implicated with protein sigma-NS in forming the matrix of viral factories, which are large inclusions in the host cytoplasm where replication intermediates are assembled and viral RNA replication takes place. Together with mu-2, recruits the other core proteins to these factories. The chain is Protein mu-NS (M3) from Mammalia (T2J).